We begin with the raw amino-acid sequence, 139 residues long: FAD synthase (139 aa).

ATP contacts are provided by residues 8 to 9 (VF), 13 to 16 (HPGH), D92, and Y119.

Belongs to the archaeal FAD synthase family. In terms of assembly, homodimer. A divalent metal cation is required as a cofactor.

The catalysed reaction is FMN + ATP + H(+) = FAD + diphosphate. It functions in the pathway cofactor biosynthesis; FAD biosynthesis; FAD from FMN: step 1/1. Functionally, catalyzes the transfer of the AMP portion of ATP to flavin mononucleotide (FMN) to produce flavin adenine dinucleotide (FAD) coenzyme. This Picrophilus torridus (strain ATCC 700027 / DSM 9790 / JCM 10055 / NBRC 100828 / KAW 2/3) protein is FAD synthase.